The sequence spans 481 residues: MRILQRALTFEDVLMVPRKSSVLPKDVSLKSRLTKNIGLNIPFISAAMDTVTEHKTAIAMARLGGIGIVHKNMDIQTQVKEITKVKKSESGVINDPIFIHAHRTLADAKVITDNYKISGVPVVDDKGLLIGILTNRDVRFETDLSKKVGDVMTKMPLVTAHVGISLDEASDLMHKHKIEKLPIVDKDNVLKGLITIKDIQKRIEYPEANKDDFGRLRVGAAIGVGQLDRAEMLVKAGVDALVLDSAHGHSANILHTLEEIKKSLVVDVIVGNVVTKEATSDLISAGADAVKVGIGPGSICTTRIVAGVGMPQVSAIDNCVEVASKFDIPVIADGGIRYSGDVAKALALGASSVMIGSLLAGTEESPGDFMIYQGRQYKSYRGMGSIGAMTKGSSDRYFQEGVASEKLVPEGIEGRVPYRGKVSDMIFQLVGGVRSSMGYQGAKNILELYQNAEFVEITSAGLKESHVHGVDITKEAPNYYG.

2 consecutive CBS domains span residues 92–148 and 152–209; these read VIND…SKKV and MTKM…PEAN. Residues D244 and 293–295 contribute to the NAD(+) site; that span reads GIG. G295 and G297 together coordinate K(+). S298 provides a ligand contact to IMP. C300 serves as a coordination point for K(+). The Thioimidate intermediate role is filled by C300. IMP-binding positions include 333–335, 356–357, and 380–384; these read DGG, GS, and YRGMG. R396 acts as the Proton acceptor in catalysis. E410 provides a ligand contact to IMP. 3 residues coordinate K(+): E464, S465, and H466.

It belongs to the IMPDH/GMPR family. In terms of assembly, homotetramer. K(+) serves as cofactor.

The catalysed reaction is IMP + NAD(+) + H2O = XMP + NADH + H(+). The protein operates within purine metabolism; XMP biosynthesis via de novo pathway; XMP from IMP: step 1/1. Mycophenolic acid (MPA) is a non-competitive inhibitor that prevents formation of the closed enzyme conformation by binding to the same site as the amobile flap. In contrast, mizoribine monophosphate (MZP) is a competitive inhibitor that induces the closed conformation. MPA is a potent inhibitor of mammalian IMPDHs but a poor inhibitor of the bacterial enzymes. MZP is a more potent inhibitor of bacterial IMPDH. Catalyzes the conversion of inosine 5'-phosphate (IMP) to xanthosine 5'-phosphate (XMP), the first committed and rate-limiting step in the de novo synthesis of guanine nucleotides, and therefore plays an important role in the regulation of cell growth. This is Inosine-5'-monophosphate dehydrogenase from Helicobacter pylori (strain J99 / ATCC 700824) (Campylobacter pylori J99).